The sequence spans 215 residues: MKKLLYITVNSKPENLSASKTVGRAFVNRFLEKHSDFEIEELDLYKCHIPRLEYEYFEKRSCLVNEDAFNKLDKKQQEEVHKIVKLTDQFKEADVYVIAAPMWSMSFPAPLKEYIDCIVMDGKTVDIKDGEKPEGLLNDKPRGAVYIQSSGAKMNVLLKMVMDKGVHYIESIMKFMGIEKFEELLVDGTGTTEEEKNKAIEKAIENIDSVIDGIW.

17 to 19 contributes to the FMN binding site; the sequence is SAS.

It belongs to the azoreductase type 1 family. Homodimer. FMN serves as cofactor.

The enzyme catalyses 2 a quinone + NADH + H(+) = 2 a 1,4-benzosemiquinone + NAD(+). The catalysed reaction is N,N-dimethyl-1,4-phenylenediamine + anthranilate + 2 NAD(+) = 2-(4-dimethylaminophenyl)diazenylbenzoate + 2 NADH + 2 H(+). Quinone reductase that provides resistance to thiol-specific stress caused by electrophilic quinones. Functionally, also exhibits azoreductase activity. Catalyzes the reductive cleavage of the azo bond in aromatic azo compounds to the corresponding amines. The sequence is that of FMN-dependent NADH:quinone oxidoreductase from Clostridium botulinum (strain Alaska E43 / Type E3).